Consider the following 421-residue polypeptide: Forkhead box protein J1 (421 aa).

Disordered stretches follow at residues 1-34 and 48-116; these read MAES…DSLT and KAPA…DYAT. Low complexity predominate over residues 66–80; sequence PGSAAPGSPLAADPA. A compositionally biased stretch (polar residues) spans 90–99; sequence KPTSSCTSRS. Positions 120-210 form a DNA-binding region, fork-head; the sequence is VKPPYSYATL…YAERLLSGAF (91 aa). The segment at 261–302 is disordered; it reads AGWGAGEGRLGHKRKQPLPKRVAKVPRPPSTLLPTPEEQGEL. The span at 271-284 shows a compositional bias: basic residues; it reads GHKRKQPLPKRVAK.

Belongs to the FOXJ1 family. In terms of tissue distribution, testis, oviduct, lung and brain cortex.

The protein resides in the nucleus. Its function is as follows. Transcription factor specifically required for the formation of motile cilia. Acts by activating transcription of genes that mediate assembly of motile cilia, such as CFAP157. Binds the DNA consensus sequences 5'-HWDTGTTTGTTTA-3' or 5'-KTTTGTTGTTKTW-3' (where H is not G, W is A or T, D is not C, and K is G or T). Activates the transcription of a variety of ciliary proteins in the developing brain and lung. The chain is Forkhead box protein J1 from Homo sapiens (Human).